Consider the following 187-residue polypeptide: Elongation factor P (187 aa).

This sequence belongs to the elongation factor P family.

The protein localises to the cytoplasm. It functions in the pathway protein biosynthesis; polypeptide chain elongation. Its function is as follows. Involved in peptide bond synthesis. Stimulates efficient translation and peptide-bond synthesis on native or reconstituted 70S ribosomes in vitro. Probably functions indirectly by altering the affinity of the ribosome for aminoacyl-tRNA, thus increasing their reactivity as acceptors for peptidyl transferase. This Sphingopyxis alaskensis (strain DSM 13593 / LMG 18877 / RB2256) (Sphingomonas alaskensis) protein is Elongation factor P.